The following is a 134-amino-acid chain: MTRPTSSAPSQRMLRIGEQVRAAITQVLQRGEVRDDVIEATVISVSEVRMSPDLKIATAYVTPLGVSDHSIVIEALNRHARFIRGRLGPQLRQMKYMPEVRFRDDTSFDNYKKIDELLRSPEVSRDLDGDNDEQ.

Belongs to the RbfA family. As to quaternary structure, monomer. Binds 30S ribosomal subunits, but not 50S ribosomal subunits or 70S ribosomes.

It localises to the cytoplasm. Its function is as follows. One of several proteins that assist in the late maturation steps of the functional core of the 30S ribosomal subunit. Associates with free 30S ribosomal subunits (but not with 30S subunits that are part of 70S ribosomes or polysomes). Required for efficient processing of 16S rRNA. May interact with the 5'-terminal helix region of 16S rRNA. The polypeptide is Ribosome-binding factor A (Rhizobium johnstonii (strain DSM 114642 / LMG 32736 / 3841) (Rhizobium leguminosarum bv. viciae)).